Reading from the N-terminus, the 243-residue chain is Ion-translocating oxidoreductase complex subunit E (243 aa).

A run of 6 helical transmembrane segments spans residues 40–60 (LGMGLATTVVLILSNVVISAL), 72–92 (AFILIIAAIVTVVDLALNAWL), 94–114 (DLHKVLGLFIALIVTNCAILG), 129–149 (ALDGLMMGIGFTLALVVVGAI), 152–172 (ILGSGTLFAQASLLLGPHFAF), and 183–203 (GFLIMILPPGGFLVVGGLFAL).

The protein belongs to the NqrDE/RnfAE family. The complex is composed of six subunits: RnfA, RnfB, RnfC, RnfD, RnfE and RnfG.

Its subcellular location is the cellular chromatophore membrane. Its function is as follows. Part of a membrane-bound complex that couples electron transfer with translocation of ions across the membrane. Required for nitrogen fixation. Involved in electron transfer to nitrogenase. The protein is Ion-translocating oxidoreductase complex subunit E of Rhodobacter capsulatus (Rhodopseudomonas capsulata).